The primary structure comprises 227 residues: Cytochrome c oxidase subunit 2 (227 aa).

Residues 1–14 (MAYPMQLGLQDATS) lie on the Mitochondrial intermembrane side of the membrane. The helical transmembrane segment at 15–45 (PIMEELTDFHDHTLMIVFLISTLVLYIISMM) threads the bilayer. Over 46–59 (LTTKLTHTSTMDAQ) the chain is Mitochondrial matrix. A helical membrane pass occupies residues 60 to 87 (EVETIWTVLPAVILVMIALPSLRILYMM). Topologically, residues 88–227 (DEINDPYLTV…QFESWASSMT (140 aa)) are mitochondrial intermembrane. Cu cation is bound by residues H161, C196, E198, C200, H204, and M207. Residue E198 participates in Mg(2+) binding.

Belongs to the cytochrome c oxidase subunit 2 family. Component of the cytochrome c oxidase (complex IV, CIV), a multisubunit enzyme composed of 14 subunits. The complex is composed of a catalytic core of 3 subunits MT-CO1, MT-CO2 and MT-CO3, encoded in the mitochondrial DNA, and 11 supernumerary subunits COX4I, COX5A, COX5B, COX6A, COX6B, COX6C, COX7A, COX7B, COX7C, COX8 and NDUFA4, which are encoded in the nuclear genome. The complex exists as a monomer or a dimer and forms supercomplexes (SCs) in the inner mitochondrial membrane with NADH-ubiquinone oxidoreductase (complex I, CI) and ubiquinol-cytochrome c oxidoreductase (cytochrome b-c1 complex, complex III, CIII), resulting in different assemblies (supercomplex SCI(1)III(2)IV(1) and megacomplex MCI(2)III(2)IV(2)). Found in a complex with TMEM177, COA6, COX18, COX20, SCO1 and SCO2. Interacts with TMEM177 in a COX20-dependent manner. Interacts with COX20. Interacts with COX16. Requires Cu cation as cofactor.

The protein localises to the mitochondrion inner membrane. The catalysed reaction is 4 Fe(II)-[cytochrome c] + O2 + 8 H(+)(in) = 4 Fe(III)-[cytochrome c] + 2 H2O + 4 H(+)(out). Component of the cytochrome c oxidase, the last enzyme in the mitochondrial electron transport chain which drives oxidative phosphorylation. The respiratory chain contains 3 multisubunit complexes succinate dehydrogenase (complex II, CII), ubiquinol-cytochrome c oxidoreductase (cytochrome b-c1 complex, complex III, CIII) and cytochrome c oxidase (complex IV, CIV), that cooperate to transfer electrons derived from NADH and succinate to molecular oxygen, creating an electrochemical gradient over the inner membrane that drives transmembrane transport and the ATP synthase. Cytochrome c oxidase is the component of the respiratory chain that catalyzes the reduction of oxygen to water. Electrons originating from reduced cytochrome c in the intermembrane space (IMS) are transferred via the dinuclear copper A center (CU(A)) of subunit 2 and heme A of subunit 1 to the active site in subunit 1, a binuclear center (BNC) formed by heme A3 and copper B (CU(B)). The BNC reduces molecular oxygen to 2 water molecules using 4 electrons from cytochrome c in the IMS and 4 protons from the mitochondrial matrix. In Cratogeomys bursarius (Plains pocket gopher), this protein is Cytochrome c oxidase subunit 2 (MT-CO2).